The sequence spans 38 residues: Mating hormone A-factor 2 (38 aa).

Positions 1-12 (MQPITTASTQAT) are enriched in polar residues. Residues 1–20 (MQPITTASTQATQKDKSSEK) form a disordered region. The propeptide occupies 1-23 (MQPITTASTQATQKDKSSEKKDN). Position 35 is a cysteine methyl ester (Cys35). Residue Cys35 is the site of S-farnesyl cysteine attachment. Positions 36 to 38 (VIA) are cleaved as a propeptide — removed in mature form.

The protein localises to the cell membrane. The active factor is excreted into the culture medium by haploid cells of the A mating type and acts on cells of the opposite mating type (type alpha). It mediates the conjugation process between the two types by inhibiting the initiation of DNA synthesis in type alpha cells and synchronizing them with type A. The sequence is that of Mating hormone A-factor 2 (MFA2) from Saccharomyces cerevisiae (strain ATCC 204508 / S288c) (Baker's yeast).